Consider the following 412-residue polypeptide: Transcription factor IIIA (412 aa).

The C2H2-type 1; degenerate zinc finger occupies 20 to 43 (YLCQYCGISRSKNYLITKHIQSHH). 3 consecutive C2H2-type zinc fingers follow at residues 66–88 (HTCQECGAEFKKPAHLKQHMQSH), 94–118 (FTCYVDDCAASYRRKDHLNRHLLTH), and 123–148 (FKCPKENCKSEFSVQGNVGRHVKKYH). The segment at 144 to 207 (VKKYHSNDNR…NGNGDSQPAE (64 aa)) is disordered. Over residues 148–188 (HSNDNRDKDNTGLGDGDKDNTCKGDDDKEKSGSGGCEKENE) the composition is skewed to basic and acidic residues. A Glycyl lysine isopeptide (Lys-Gly) (interchain with G-Cter in ubiquitin) cross-link involves residue Lys185. A C2H2-type 5 zinc finger spans residues 215–239 (VVCKEIGCGKAFKYPSQLQKHQDSH). A C2H2-type 6; degenerate zinc finger spans residues 247–272 (AFCSEPGCMKYFTNEECLKSHIRSCH). The C2H2-type 7; degenerate zinc finger occupies 275 to 296 (INCEICGSKHLKKNIKRHLRTH). The C2H2-type 8 zinc-finger motif lies at 305-330 (IKCEVEGCSSTFSKASNLQKHMKAVH). Residues 336 to 362 (FVCGFPGCGMRFAYKHVRNKHENSGYH) form a C2H2-type 9; degenerate zinc finger. Positions 384 to 391 (LKRKQVTA) match the Nuclear localization signal motif.

Protein product TFIIIA (44 kDa) is proteolytically cleaved into TFIIIA-C (34 kDa). As to expression, expressed in seedlings, flowers, siliques and seeds.

It is found in the nucleus. It localises to the nucleolus. Essential protein. Isoform 1 is a transcription activator the binds both 5S rDNA and 5S rRNA and stimulates the transcription of 5S rRNA gene. Isoform 1 regulates 5S rRNA levels during development. This Arabidopsis thaliana (Mouse-ear cress) protein is Transcription factor IIIA.